A 185-amino-acid polypeptide reads, in one-letter code: Peptidoglycan-recognition protein SC1a (185 aa).

The N-terminal stretch at 1–21 (MVSKVALLLAVLVCSQYMAQG) is a signal peptide. Residues 46-170 (SYAIIHHTAG…RQVSATECPG (125 aa)) enclose the N-acetylmuramoyl-L-alanine amidase domain. Histidine 51 is a Zn(2+) binding site. A disulfide bond links cysteine 58 and cysteine 64. 2 residues coordinate Zn(2+): histidine 160 and cysteine 168.

It belongs to the N-acetylmuramoyl-L-alanine amidase 2 family. It depends on Zn(2+) as a cofactor.

Its subcellular location is the secreted. The catalysed reaction is Hydrolyzes the link between N-acetylmuramoyl residues and L-amino acid residues in certain cell-wall glycopeptides.. N-acetylmuramyl-L-alanine amidase involved in innate immunity by degrading bacterial peptidoglycans (PGN). Plays a scavenger role by digesting biologically active PGN into biologically inactive fragments. Has no direct bacteriolytic activity. The chain is Peptidoglycan-recognition protein SC1a from Drosophila melanogaster (Fruit fly).